The primary structure comprises 112 residues: U15-hexatoxin-Hi1a (112 aa).

A signal peptide spans Met-1–Gly-18. A propeptide spanning residues Asp-19–Arg-73 is cleaved from the precursor. 3 cysteine pairs are disulfide-bonded: Cys-74/Cys-88, Cys-81/Cys-93, and Cys-87/Cys-107.

This sequence belongs to the neurotoxin 14 (magi-1) family. 08 (Ltx-4) subfamily. Expressed by the venom gland.

It localises to the secreted. In terms of biological role, probable ion channel inhibitor. In Hadronyche infensa (Fraser island funnel-web spider), this protein is U15-hexatoxin-Hi1a.